The sequence spans 476 residues: ATP synthase subunit beta, mitochondrial (476 aa).

156–163 (GAGVGKTV) provides a ligand contact to ATP.

F-type ATP synthases have 2 components, the catalytic core F(1) and the membrane-embedded component F(0), linked together by a central stalk and a peripheral stalk. The central stalk, also called rotor shaft, is often seen as part of F(1). The peripheral stalk is seen as part of F(0). F(0) contains the membrane channel next to the rotor. F-type ATP synthases form dimers but each monomer functions independently in ATP generation. The dimer consists of 18 different polypeptides: ATP1 (subunit alpha, part of F(1), 3 molecules per monomer), ATP2 (subunit beta, part of F(1), 3 molecules per monomer), ATP3 (subunit gamma, part of the central stalk), ATP4 (subunit b, part of the peripheral stalk), ATP5/OSCP (subunit 5/OSCP, part of the peripheral stalk), ATP6 (subunit a, part of the peripheral stalk), ATP7 (subunit d, part of the peripheral stalk), ATP8 (subunit 8, part of the peripheral stalk), OLI1 (subunit c, part of the rotor, 10 molecules per monomer), ATP14 (subunit h, part of the peripheral stalk), ATP15 (subunit epsilon, part of the central stalk), ATP16 (subunit delta, part of the central stalk), ATP17 (subunit f, part of the peripheral stalk), ATP18 (subunit i/j, part of the peripheral stalk). Dimer-specific subunits are ATP19 (subunit k, at interface between monomers), ATP20 (subunit g, at interface between monomers), TIM11 (subunit e, at interface between monomers). Also contains subunit L.

The protein localises to the mitochondrion inner membrane. It carries out the reaction ATP + H2O + 4 H(+)(in) = ADP + phosphate + 5 H(+)(out). In terms of biological role, mitochondrial membrane ATP synthase (F(1)F(0) ATP synthase or Complex V) produces ATP from ADP in the presence of a proton gradient across the membrane which is generated by electron transport complexes of the respiratory chain. F-type ATP synthases consist of two structural domains, F(1) - containing the extramembraneous catalytic core, and F(0) - containing the membrane proton channel, linked together by a central stalk and a peripheral stalk. During catalysis, ATP synthesis in the catalytic domain of F(1) is coupled via a rotary mechanism of the central stalk subunits to proton translocation. Subunits alpha/ATP1 and beta/ATP2 form the catalytic core in F(1). Rotation of the central stalk against the surrounding alpha/ATP1(3)beta/ATP2(3) subunits leads to hydrolysis of ATP in three separate catalytic sites on the beta/ATP2 subunits. This chain is ATP synthase subunit beta, mitochondrial, found in Pichia angusta (Yeast).